The primary structure comprises 165 residues: UPF0254 protein MmarC7_0182 (165 aa).

Belongs to the UPF0254 family.

The chain is UPF0254 protein MmarC7_0182 from Methanococcus maripaludis (strain C7 / ATCC BAA-1331).